Reading from the N-terminus, the 615-residue chain is Dihydroxy-acid dehydratase (615 aa).

Residue D85 coordinates Mg(2+). C126 contributes to the [2Fe-2S] cluster binding site. The Mg(2+) site is built by D127 and K128. K128 carries the N6-carboxylysine modification. C199 is a [2Fe-2S] cluster binding site. E495 lines the Mg(2+) pocket. S521 (proton acceptor) is an active-site residue.

It belongs to the IlvD/Edd family. In terms of assembly, homodimer. The cofactor is [2Fe-2S] cluster. Requires Mg(2+) as cofactor.

It carries out the reaction (2R)-2,3-dihydroxy-3-methylbutanoate = 3-methyl-2-oxobutanoate + H2O. The enzyme catalyses (2R,3R)-2,3-dihydroxy-3-methylpentanoate = (S)-3-methyl-2-oxopentanoate + H2O. It participates in amino-acid biosynthesis; L-isoleucine biosynthesis; L-isoleucine from 2-oxobutanoate: step 3/4. It functions in the pathway amino-acid biosynthesis; L-valine biosynthesis; L-valine from pyruvate: step 3/4. Functions in the biosynthesis of branched-chain amino acids. Catalyzes the dehydration of (2R,3R)-2,3-dihydroxy-3-methylpentanoate (2,3-dihydroxy-3-methylvalerate) into 2-oxo-3-methylpentanoate (2-oxo-3-methylvalerate) and of (2R)-2,3-dihydroxy-3-methylbutanoate (2,3-dihydroxyisovalerate) into 2-oxo-3-methylbutanoate (2-oxoisovalerate), the penultimate precursor to L-isoleucine and L-valine, respectively. The polypeptide is Dihydroxy-acid dehydratase (Mannheimia succiniciproducens (strain KCTC 0769BP / MBEL55E)).